The following is a 249-amino-acid chain: 5'-nucleotidase SurE (249 aa).

Residues Asp-8, Asp-9, Ser-39, and Asn-91 each coordinate a divalent metal cation.

It belongs to the SurE nucleotidase family. It depends on a divalent metal cation as a cofactor.

Its subcellular location is the cytoplasm. It carries out the reaction a ribonucleoside 5'-phosphate + H2O = a ribonucleoside + phosphate. Its function is as follows. Nucleotidase that shows phosphatase activity on nucleoside 5'-monophosphates. The protein is 5'-nucleotidase SurE of Pseudomonas aeruginosa (strain LESB58).